The sequence spans 339 residues: Glycerol-3-phosphate dehydrogenase [NAD(P)+] (339 aa).

Positions 15, 16, 36, and 110 each coordinate NADPH. Lys110, Gly139, and Thr141 together coordinate sn-glycerol 3-phosphate. Ala143 lines the NADPH pocket. Sn-glycerol 3-phosphate-binding residues include Lys195, Asp248, Ser258, Arg259, and Asn260. Lys195 (proton acceptor) is an active-site residue. Residue Arg259 participates in NADPH binding. 2 residues coordinate NADPH: Val283 and Glu285.

It belongs to the NAD-dependent glycerol-3-phosphate dehydrogenase family.

Its subcellular location is the cytoplasm. The catalysed reaction is sn-glycerol 3-phosphate + NAD(+) = dihydroxyacetone phosphate + NADH + H(+). It carries out the reaction sn-glycerol 3-phosphate + NADP(+) = dihydroxyacetone phosphate + NADPH + H(+). Its pathway is membrane lipid metabolism; glycerophospholipid metabolism. Functionally, catalyzes the reduction of the glycolytic intermediate dihydroxyacetone phosphate (DHAP) to sn-glycerol 3-phosphate (G3P), the key precursor for phospholipid synthesis. The sequence is that of Glycerol-3-phosphate dehydrogenase [NAD(P)+] from Klebsiella pneumoniae subsp. pneumoniae (strain ATCC 700721 / MGH 78578).